The sequence spans 101 residues: Feather keratin Cos2-3 (101 aa).

Ser-2 bears the N-acetylserine mark.

It belongs to the avian keratin family. The avian keratins (F-ker, S-ker, C-ker and B-ker) are a complex mixture of very similar polypeptides.

This is Feather keratin Cos2-3 from Columba livia (Rock dove).